The sequence spans 208 residues: Small ribosomal subunit protein uS4 (208 aa).

The S4 RNA-binding domain occupies 98-160; sequence CRLDNVVYRM…AKKQSRIQLA (63 aa).

Belongs to the universal ribosomal protein uS4 family. Part of the 30S ribosomal subunit. Contacts protein S5. The interaction surface between S4 and S5 is involved in control of translational fidelity.

Functionally, one of the primary rRNA binding proteins, it binds directly to 16S rRNA where it nucleates assembly of the body of the 30S subunit. In terms of biological role, with S5 and S12 plays an important role in translational accuracy. The sequence is that of Small ribosomal subunit protein uS4 from Vesicomyosocius okutanii subsp. Calyptogena okutanii (strain HA).